The following is a 308-amino-acid chain: Porphobilinogen deaminase (308 aa).

S-(dipyrrolylmethanemethyl)cysteine is present on Cys-241.

The protein belongs to the HMBS family. In terms of assembly, monomer. Requires dipyrromethane as cofactor.

It catalyses the reaction 4 porphobilinogen + H2O = hydroxymethylbilane + 4 NH4(+). Its pathway is porphyrin-containing compound metabolism; protoporphyrin-IX biosynthesis; coproporphyrinogen-III from 5-aminolevulinate: step 2/4. In terms of biological role, tetrapolymerization of the monopyrrole PBG into the hydroxymethylbilane pre-uroporphyrinogen in several discrete steps. In Exiguobacterium sibiricum (strain DSM 17290 / CCUG 55495 / CIP 109462 / JCM 13490 / 255-15), this protein is Porphobilinogen deaminase.